The primary structure comprises 219 residues: MADQIEIQRMNQDLQEPLAEIMPSVLTAMSYLLQRVSETNDNLSQKQKPSSFTGVTKPSISIRSYLERIFEYANCSYSCYIVAYIYLDRFVKKQPFLPINSFNVHRLIITSVLVSAKFMDDLSYNNEYYAKVGGISREEMNMLELDFLFGIGFELNVTVSTFNNYCCFLQREMAMLMKMKSLFLEPSSFKISSKTKLVMYPHEEDSLSTHHNKKQLAAA.

This sequence belongs to the cyclin family. Cyclin U/P subfamily. In terms of assembly, interacts with CDKA-1. As to expression, expressed at low levels in roots, stems and flowers. Expressed in the shoot apex, leaf primordia and young leaves.

The protein is Cyclin-U4-3 (CYCU4-3) of Arabidopsis thaliana (Mouse-ear cress).